The primary structure comprises 209 residues: Urease accessory protein UreG (209 aa).

18–25 (GPVGSGKT) is a binding site for GTP.

This sequence belongs to the SIMIBI class G3E GTPase family. UreG subfamily. In terms of assembly, homodimer. UreD, UreF and UreG form a complex that acts as a GTP-hydrolysis-dependent molecular chaperone, activating the urease apoprotein by helping to assemble the nickel containing metallocenter of UreC. The UreE protein probably delivers the nickel.

Its subcellular location is the cytoplasm. Its function is as follows. Facilitates the functional incorporation of the urease nickel metallocenter. This process requires GTP hydrolysis, probably effectuated by UreG. The polypeptide is Urease accessory protein UreG (Cupriavidus necator (strain ATCC 17699 / DSM 428 / KCTC 22496 / NCIMB 10442 / H16 / Stanier 337) (Ralstonia eutropha)).